The primary structure comprises 66 residues: DNA-directed RNA polymerase subunit Rpo10 (66 aa).

Cysteine 7, cysteine 10, cysteine 44, and cysteine 45 together coordinate Zn(2+).

The protein belongs to the archaeal Rpo10/eukaryotic RPB10 RNA polymerase subunit family. Part of the RNA polymerase complex. Zn(2+) is required as a cofactor.

Its subcellular location is the cytoplasm. The catalysed reaction is RNA(n) + a ribonucleoside 5'-triphosphate = RNA(n+1) + diphosphate. Functionally, DNA-dependent RNA polymerase (RNAP) catalyzes the transcription of DNA into RNA using the four ribonucleoside triphosphates as substrates. In Hyperthermus butylicus (strain DSM 5456 / JCM 9403 / PLM1-5), this protein is DNA-directed RNA polymerase subunit Rpo10.